Here is a 151-residue protein sequence, read N- to C-terminus: MQIILMEKVVNLGQLGDVVKVKNGYARNFLIPQGKAKRATQAAVAEFESKRAELEKTQADILAAAQARAAKLEGLMLQVTQKAGVDGKLFGSVTNADIEDALKAQGFEVERSMIRMPQGSLKQVGDHPVTIVLHTDVAAHIIVSVLGESVS.

The protein belongs to the bacterial ribosomal protein bL9 family.

Its function is as follows. Binds to the 23S rRNA. The sequence is that of Large ribosomal subunit protein bL9 from Nitrosospira multiformis (strain ATCC 25196 / NCIMB 11849 / C 71).